We begin with the raw amino-acid sequence, 38 residues long: GVPINVSCTGSPQCIKPCKDAGMRFGKCMNRKCHCTPK.

Cystine bridges form between Cys8/Cys28, Cys14/Cys33, and Cys18/Cys35.

The protein belongs to the short scorpion toxin superfamily. Potassium channel inhibitor family. Alpha-KTx 03 subfamily. Expressed by the venom gland.

The protein resides in the secreted. In terms of biological role, potent inhibitor of the Shaker potassium channels and its mammalian homologs (Kv1.1/KCNA1, Kv1.3/KCNA3, Kv1.6/KCNA6) (Ki&lt;1 nM for all channels). Also blocks Kv1.2/KCNA2 (IC(50)=26.8 nM). It also shows a weak interaction with nicotinic acetylcholine receptors (nAChR), suggesting it may weakly inhibit it. This chain is Potassium channel toxin alpha-KTx 3.2, found in Leiurus hebraeus (Hebrew deathstalker scorpion).